The following is a 162-amino-acid chain: Balbiani ring protein 2 (162 aa).

Residues Cys1–Thr31 form a last constant region region. Positions Val32–Lys51 are last Cys-1 repeat. The tract at residues Lys52 to Ser162 is unique region.

As to expression, salivary gland.

It is found in the secreted. Functionally, used by the larvae to construct a supramolecular structure, the larval tube. In Chironomus pallidivittatus (Midge), this protein is Balbiani ring protein 2 (BR2).